The following is an 85-amino-acid chain: Conotoxin Lt28.5 (85 aa).

The signal sequence occupies residues 1-21 (MPKLEMMLLVLLILPLCYIDA). The propeptide occupies 22–40 (VGPPPPWNMEDEIIEHWQK).

The protein belongs to the conotoxin D superfamily. Post-translationally, contains 5 disulfide bonds. In terms of tissue distribution, expressed by the venom duct.

It localises to the secreted. In terms of biological role, probable neurotoxin. In Conus litteratus (Lettered cone), this protein is Conotoxin Lt28.5.